The primary structure comprises 338 residues: HLA class I histocompatibility antigen, alpha chain G (338 aa).

The N-terminal stretch at 1-24 is a signal peptide; that stretch reads MVVMAPRTLFLLLSGALTLTETWA. Positions 3–11 are VL9 epitope; it reads VMAPRTLFL. Residues 25–114 are alpha-1; sequence GSHSMRYFSA…LRGYYNQSEA (90 aa). The Extracellular portion of the chain corresponds to 25–308; sequence GSHSMRYFSA…KQSSLPTIPI (284 aa). Positions 31, 94, 101, and 108 each coordinate a peptide antigen. A glycan (N-linked (GlcNAc...) asparagine) is linked at Asn110. The alpha-2 stretch occupies residues 115 to 206; it reads SSHTLQWMIG…ENGKEMLQRA (92 aa). Residues Cys125 and Cys188 are joined by a disulfide bond. Ser167, Lys170, Gln179, Arg180, Tyr183, and Tyr195 together coordinate a peptide antigen. Positions 207 to 298 are alpha-3; that stretch reads DPPKTHVTHH…GLPEPLMLRW (92 aa). The Ig-like C1-type domain maps to 209–299; that stretch reads PKTHVTHHPV…LPEPLMLRWK (91 aa). A disulfide bond links Cys227 and Cys283. The tract at residues 299 to 308 is connecting peptide; that stretch reads KQSSLPTIPI. A helical membrane pass occupies residues 309–332; sequence MGIVAGLVVLAAVVTGAAVAAVLW. Over 333 to 338 the chain is Cytoplasmic; the sequence is RKKSSD. Residues 334-336 carry the ER-retrieval signal motif; sequence KKS.

This sequence belongs to the MHC class I family. Forms a heterotrimer with B2M and a self-peptide (peptide-bound HLA-G-B2M). HLA-G-B2M complex interacts with components of the antigen processing machinery TAPBP and TAP1-TAP2 complex; this interaction is required for loading of high affinity peptides and heterotrimer translocation to the cell surface. Interacts with CALCR; this interaction is required for appropriate folding. Interacts with COPB1; this interaction mediates the endoplasmic reticulum (ER) retrieval of HLA-G-B2M complexes that bind low affinity peptides. On the cell surface, peptide-bound HLA-G-B2M molecules (referred to as monomers) can form disulfide-linked homomultimers, homodimers and homotrimers. Interacts with KIR2DL4; this interaction is direct. Interacts with LILRB1 and LILRB2 receptors; this interaction is direct. Interacts with CD160; this interactions is direct. Interacts with CD8A homodimer; this interaction is direct and might down-regulate T cell receptor signaling. Isoform 2: Forms a non-disulfide-linked homodimer and interacts with LILRB2. Post-translationally, N-glycosylated. Produced by proteolytic cleavage at the cell surface (shedding) by matrix metalloproteinase MMP2. Expressed in adult eye. Expressed in immune cell subsets including monocytes, myeloid and plasmacytoid dendritic cells and regulatory T cells (Tr1)(at protein level). Secreted by follicular dendritic cell and follicular helper T cells. As to expression, detected in physiological fluids including amniotic fluid and serum. In terms of tissue distribution, expressed in placenta, amniotic membrane, skin, cord blood and peripheral blood mononuclear cells.

It localises to the cell membrane. Its subcellular location is the endoplasmic reticulum membrane. It is found in the early endosome membrane. The protein resides in the secreted. The protein localises to the early endosome. It localises to the cell projection. Its subcellular location is the filopodium membrane. In terms of biological role, non-classical major histocompatibility class Ib molecule involved in immune regulatory processes at the maternal-fetal interface. In complex with B2M/beta-2 microglobulin binds a limited repertoire of nonamer self-peptides derived from intracellular proteins including histones and ribosomal proteins. Peptide-bound HLA-G-B2M complex acts as a ligand for inhibitory/activating KIR2DL4, LILRB1 and LILRB2 receptors on uterine immune cells to promote fetal development while maintaining maternal-fetal tolerance. Upon interaction with KIR2DL4 and LILRB1 receptors on decidual NK cells, it triggers NK cell senescence-associated secretory phenotype as a molecular switch to promote vascular remodeling and fetal growth in early pregnancy. Through interaction with KIR2DL4 receptor on decidual macrophages induces pro-inflammatory cytokine production mainly associated with tissue remodeling. Through interaction with LILRB2 receptor triggers differentiation of type 1 regulatory T cells and myeloid-derived suppressor cells, both of which actively maintain maternal-fetal tolerance. May play a role in balancing tolerance and antiviral-immunity at maternal-fetal interface by keeping in check the effector functions of NK, CD8+ T cells and B cells. Reprograms B cells toward an immune suppressive phenotype via LILRB1. May induce immune activation/suppression via intercellular membrane transfer (trogocytosis), likely enabling interaction with KIR2DL4, which resides mostly in endosomes. Through interaction with the inhibitory receptor CD160 on endothelial cells may control angiogenesis in immune privileged sites. Its function is as follows. Likely does not bind B2M and presents peptides. Negatively regulates NK cell- and CD8+ T cell-mediated cytotoxicity. Functionally, non-classical major histocompatibility class Ib molecule involved in immune regulatory processes at the maternal-fetal interface. In complex with B2M/beta-2 microglobulin binds a limited repertoire of nonamer self-peptides derived from intracellular proteins including histones and ribosomal proteins. Peptide-bound HLA-G-B2M complex acts as a ligand for inhibitory/activating KIR2DL4, LILRB1 and LILRB2 receptors on uterine immune cells to promote fetal development while maintaining maternal-fetal tolerance. Upon interaction with KIR2DL4 and LILRB1 receptors on decidual NK cells, it triggers NK cell senescence-associated secretory phenotype as a molecular switch to promote vascular remodeling and fetal growth in early pregnancy. Through interaction with KIR2DL4 receptor on decidual macrophages induces pro-inflammatory cytokine production mainly associated with tissue remodeling. Through interaction with LILRB2 receptor triggers differentiation of type 1 regulatory T cells and myeloid-derived suppressor cells, both of which actively maintain maternal-fetal tolerance. Reprograms B cells toward an immune suppressive phenotype via LILRB1. Likely does not bind B2M and presents peptides. This chain is HLA class I histocompatibility antigen, alpha chain G, found in Homo sapiens (Human).